We begin with the raw amino-acid sequence, 194 residues long: 7-methyl-GTP pyrophosphatase (194 aa).

Aspartate 69 (proton acceptor) is an active-site residue.

This sequence belongs to the Maf family. YceF subfamily. It depends on a divalent metal cation as a cofactor.

It localises to the cytoplasm. It carries out the reaction N(7)-methyl-GTP + H2O = N(7)-methyl-GMP + diphosphate + H(+). Its function is as follows. Nucleoside triphosphate pyrophosphatase that hydrolyzes 7-methyl-GTP (m(7)GTP). May have a dual role in cell division arrest and in preventing the incorporation of modified nucleotides into cellular nucleic acids. In Sodalis glossinidius (strain morsitans), this protein is 7-methyl-GTP pyrophosphatase.